The following is a 157-amino-acid chain: Small ribosomal subunit protein uS7 (157 aa).

Belongs to the universal ribosomal protein uS7 family. As to quaternary structure, part of the 30S ribosomal subunit. Contacts proteins S9 and S11.

One of the primary rRNA binding proteins, it binds directly to 16S rRNA where it nucleates assembly of the head domain of the 30S subunit. Is located at the subunit interface close to the decoding center, probably blocks exit of the E-site tRNA. This chain is Small ribosomal subunit protein uS7, found in Francisella tularensis subsp. tularensis (strain FSC 198).